Reading from the N-terminus, the 364-residue chain is Aminomethyltransferase (364 aa).

Belongs to the GcvT family. As to quaternary structure, the glycine cleavage system is composed of four proteins: P, T, L and H.

The enzyme catalyses N(6)-[(R)-S(8)-aminomethyldihydrolipoyl]-L-lysyl-[protein] + (6S)-5,6,7,8-tetrahydrofolate = N(6)-[(R)-dihydrolipoyl]-L-lysyl-[protein] + (6R)-5,10-methylene-5,6,7,8-tetrahydrofolate + NH4(+). The glycine cleavage system catalyzes the degradation of glycine. This is Aminomethyltransferase from Shewanella baltica (strain OS155 / ATCC BAA-1091).